The chain runs to 153 residues: Putative adenylate kinase (153 aa).

ATP contacts are provided by Gly12, Gly14, Lys15, Ser16, and Thr17. An NMP region spans residues 31–47; that stretch reads EGNELAKEYGCLFDEEV. The interval 94–104 is LID; it reads ARGYSEEKIQE. Position 95 (Arg95) interacts with ATP.

The protein belongs to the adenylate kinase family. AK6 subfamily. Interacts with uS11. Not a structural component of 40S pre-ribosomes, but transiently interacts with them by binding to uS11.

It carries out the reaction AMP + ATP = 2 ADP. The catalysed reaction is ATP + H2O = ADP + phosphate + H(+). Functionally, broad-specificity nucleoside monophosphate (NMP) kinase that catalyzes the reversible transfer of the terminal phosphate group between nucleoside triphosphates and monophosphates. Also has ATPase activity. Involved in the late maturation steps of the 30S ribosomal particles, specifically 16S rRNA maturation. While NMP activity is not required for ribosome maturation, ATPase activity is. Associates transiently with small ribosomal subunit protein uS11. ATP hydrolysis breaks the interaction with uS11. May temporarily remove uS11 from the ribosome to enable a conformational change of the ribosomal RNA that is needed for the final maturation step of the small ribosomal subunit. This chain is Putative adenylate kinase, found in Thermoplasma volcanium (strain ATCC 51530 / DSM 4299 / JCM 9571 / NBRC 15438 / GSS1).